Reading from the N-terminus, the 160-residue chain is Cyclic pyranopterin monophosphate synthase (160 aa).

Residues 75–77 (LCH) and 113–114 (ME) each bind substrate. Aspartate 128 is an active-site residue.

Belongs to the MoaC family. Homohexamer; trimer of dimers.

The catalysed reaction is (8S)-3',8-cyclo-7,8-dihydroguanosine 5'-triphosphate = cyclic pyranopterin phosphate + diphosphate. Its pathway is cofactor biosynthesis; molybdopterin biosynthesis. In terms of biological role, catalyzes the conversion of (8S)-3',8-cyclo-7,8-dihydroguanosine 5'-triphosphate to cyclic pyranopterin monophosphate (cPMP). The chain is Cyclic pyranopterin monophosphate synthase from Beijerinckia indica subsp. indica (strain ATCC 9039 / DSM 1715 / NCIMB 8712).